The following is a 60-amino-acid chain: UPF0434 protein PM0859 (60 aa).

The protein belongs to the UPF0434 family.

The chain is UPF0434 protein PM0859 from Pasteurella multocida (strain Pm70).